A 288-amino-acid polypeptide reads, in one-letter code: 4-hydroxybenzoate octaprenyltransferase (288 aa).

Transmembrane regions (helical) follow at residues 23–43 (IGSL…GRGI), 46–66 (AKIL…GCVV), 98–118 (ILFV…NSMT), 141–161 (LPQV…FAAV), 163–183 (ESLP…TVAY), 213–233 (LIIG…GWLM), 234–254 (NLGG…THQQ), and 268–288 (AFLN…ISYW).

This sequence belongs to the UbiA prenyltransferase family. It depends on Mg(2+) as a cofactor.

It localises to the cell inner membrane. The enzyme catalyses all-trans-octaprenyl diphosphate + 4-hydroxybenzoate = 4-hydroxy-3-(all-trans-octaprenyl)benzoate + diphosphate. It functions in the pathway cofactor biosynthesis; ubiquinone biosynthesis. Functionally, catalyzes the prenylation of para-hydroxybenzoate (PHB) with an all-trans polyprenyl group. Mediates the second step in the final reaction sequence of ubiquinone-8 (UQ-8) biosynthesis, which is the condensation of the polyisoprenoid side chain with PHB, generating the first membrane-bound Q intermediate 3-octaprenyl-4-hydroxybenzoate. This chain is 4-hydroxybenzoate octaprenyltransferase, found in Yersinia pestis bv. Antiqua (strain Antiqua).